Reading from the N-terminus, the 244-residue chain is MFRSLLVAAAQRPQAPGPGPPRPPPPAGPAAEALEAQFSCPICLEVFHRAVGIAGCGHTFCGECLQPCLQVPSPLCPLCRMPFDPKKVEKASSVEKQLSSYKAPCRGCSKKVTLAKMRSHVSSCAKVQEQMANCPKFVPVVPTSQPIPSNIPNRSTFVCPYCGARNLDQQELVKHCMENHRNDPNKVVCPVCSAMPWGDPSYKSANFLQHLLHRHKFSYDTFVDYNIDEEAALQAALALSLSEN.

The interval 10–30 is disordered; the sequence is AQRPQAPGPGPPRPPPPAGPA. A compositionally biased stretch (pro residues) spans 15–28; it reads APGPGPPRPPPPAG. An RING-type zinc finger spans residues 40 to 80; sequence CPICLEVFHRAVGIAGCGHTFCGECLQPCLQVPSPLCPLCR. 4 residues coordinate Zn(2+): C105, C108, H120, and C124. The C2HC RNF-type zinc finger occupies 105 to 124; the sequence is CRGCSKKVTLAKMRSHVSSC. Positions 228–244 constitute a UIM domain; sequence DEEAALQAALALSLSEN.

The protein resides in the cytoplasm. The enzyme catalyses S-ubiquitinyl-[E2 ubiquitin-conjugating enzyme]-L-cysteine + [acceptor protein]-L-lysine = [E2 ubiquitin-conjugating enzyme]-L-cysteine + N(6)-ubiquitinyl-[acceptor protein]-L-lysine.. It participates in protein modification; protein ubiquitination. Functionally, E3 ubiquitin-protein ligase that promotes the ubiquitination of different substrates. The sequence is that of E3 ubiquitin-protein ligase RNF166 (RNF166) from Gallus gallus (Chicken).